Consider the following 94-residue polypeptide: Large ribosomal subunit protein bL25 (94 aa).

This sequence belongs to the bacterial ribosomal protein bL25 family. Part of the 50S ribosomal subunit; part of the 5S rRNA/L5/L18/L25 subcomplex. Contacts the 5S rRNA. Binds to the 5S rRNA independently of L5 and L18.

Its function is as follows. This is one of the proteins that binds to the 5S RNA in the ribosome where it forms part of the central protuberance. This chain is Large ribosomal subunit protein bL25, found in Sodalis glossinidius (strain morsitans).